The primary structure comprises 198 residues: Recombination protein RecR (198 aa).

A C4-type zinc finger spans residues 57–72 (CSVCGHITENDPCYIC). The Toprim domain maps to 80–175 (SVICVVEDDK…KVTRLAQGLS (96 aa)).

This sequence belongs to the RecR family.

Functionally, may play a role in DNA repair. It seems to be involved in an RecBC-independent recombinational process of DNA repair. It may act with RecF and RecO. The protein is Recombination protein RecR of Staphylococcus aureus (strain MRSA252).